The following is a 416-amino-acid chain: UDP-N-acetylglucosamine 1-carboxyvinyltransferase (416 aa).

22-23 is a binding site for phosphoenolpyruvate; that stretch reads KN. Residue Arg-92 coordinates UDP-N-acetyl-alpha-D-glucosamine. Cys-116 serves as the catalytic Proton donor. Position 116 is a 2-(S-cysteinyl)pyruvic acid O-phosphothioketal (Cys-116). Residues 121 to 125, Asp-304, and Ile-326 contribute to the UDP-N-acetyl-alpha-D-glucosamine site; that span reads RPVDQ.

The protein belongs to the EPSP synthase family. MurA subfamily.

It is found in the cytoplasm. The enzyme catalyses phosphoenolpyruvate + UDP-N-acetyl-alpha-D-glucosamine = UDP-N-acetyl-3-O-(1-carboxyvinyl)-alpha-D-glucosamine + phosphate. It functions in the pathway cell wall biogenesis; peptidoglycan biosynthesis. Functionally, cell wall formation. Adds enolpyruvyl to UDP-N-acetylglucosamine. The polypeptide is UDP-N-acetylglucosamine 1-carboxyvinyltransferase (Aromatoleum aromaticum (strain DSM 19018 / LMG 30748 / EbN1) (Azoarcus sp. (strain EbN1))).